The sequence spans 312 residues: Aldehyde reductase YPR1 (312 aa).

The active-site Proton donor is the Tyr-56. Position 112 (His-112) interacts with substrate. 220–274 (SPFGSANAPLLKEQAIIDMAKKHGVEPAQLIISWSIQRGYVVLAKSVNPERIVSN) is a binding site for NADP(+).

It belongs to the aldo/keto reductase family.

The protein resides in the cytoplasm. It catalyses the reaction a primary alcohol + NADP(+) = an aldehyde + NADPH + H(+). It carries out the reaction 2-methylbutan-1-ol + NADP(+) = 2-methylbutanal + NADPH + H(+). The catalysed reaction is hexan-1-ol + NADP(+) = hexanal + NADPH + H(+). Aldehyde reductase with broad substrate specificity, catalyzing the NADPH-dependent reduction of aldehydes into the corresponding alcohols. In vitro, displays high specific activity towards 2-methylbutanal (2-methylbutyraldehyde), as well as other aldehydes such as hexanal (a toxic lipid peroxidation product and phytoalexin), but exhibits extremely low activity as a glycerol dehydrogenase. Seems to contribute to 2-methylbutanal reduction in vivo, and may therefore play a role in isoleucine catabolism and fusel alcohol formation. This chain is Aldehyde reductase YPR1 (YPR1), found in Saccharomyces cerevisiae (strain ATCC 204508 / S288c) (Baker's yeast).